The primary structure comprises 158 residues: Cyclic pyranopterin monophosphate synthase (158 aa).

Substrate contacts are provided by residues 74–76 and 112–113; these read MCH and ME. Residue D127 is part of the active site.

This sequence belongs to the MoaC family. In terms of assembly, homohexamer; trimer of dimers.

It catalyses the reaction (8S)-3',8-cyclo-7,8-dihydroguanosine 5'-triphosphate = cyclic pyranopterin phosphate + diphosphate. It functions in the pathway cofactor biosynthesis; molybdopterin biosynthesis. Catalyzes the conversion of (8S)-3',8-cyclo-7,8-dihydroguanosine 5'-triphosphate to cyclic pyranopterin monophosphate (cPMP). The sequence is that of Cyclic pyranopterin monophosphate synthase from Helicobacter pylori (strain ATCC 700392 / 26695) (Campylobacter pylori).